The chain runs to 241 residues: Probable septum site-determining protein MinC (241 aa).

It belongs to the MinC family. Interacts with MinD and FtsZ.

Cell division inhibitor that blocks the formation of polar Z ring septums. Rapidly oscillates between the poles of the cell to destabilize FtsZ filaments that have formed before they mature into polar Z rings. Prevents FtsZ polymerization. This chain is Probable septum site-determining protein MinC, found in Rhizobium rhizogenes (strain K84 / ATCC BAA-868) (Agrobacterium radiobacter).